The chain runs to 689 residues: Glycine--tRNA ligase beta subunit (689 aa).

Belongs to the class-II aminoacyl-tRNA synthetase family. In terms of assembly, tetramer of two alpha and two beta subunits.

The protein localises to the cytoplasm. It carries out the reaction tRNA(Gly) + glycine + ATP = glycyl-tRNA(Gly) + AMP + diphosphate. The chain is Glycine--tRNA ligase beta subunit from Cronobacter sakazakii (strain ATCC BAA-894) (Enterobacter sakazakii).